A 337-amino-acid chain; its full sequence is MKRIAVLTSGGDAPGMNAAVRAVVRKAISEGMEVCGINRGYAGMVEGDIFPLDAKGVSNILSRGGTFLQSARYPEFAKLEGQLKGIEQLKKHGIEGVVVIGGDGSYHGAMRLTEHGFPAVGLPGTIDNDIVGTDYTIGFDTAVNTATDALDKIRDTSFSHGRTFVVEVMGRNAGDIALWSGIAAGADQIIIPEEPYDIKEVVANVKNGYLSKSKNHHLIVLAEGVMHGEEFAAQMKEAGDNSDLRVTNLGHILRGGAPTPRDRVIASWMGAHAVELLREGKGGLAIGIQNEELVEHPILGSAEDGALFSLTEQGEIVVNNPHKARLDFAALNRDLSN.

G11 serves as a coordination point for ATP. 21–25 (RAVVR) contacts ADP. Residues 72–73 (RY) and 102–105 (GDGS) each bind ATP. D103 contributes to the Mg(2+) binding site. Residue 125–127 (TID) coordinates substrate. D127 (proton acceptor) is an active-site residue. Residue R154 participates in ADP binding. Substrate contacts are provided by residues R162 and 169 to 171 (MGR). ADP contacts are provided by residues 185–187 (GAD) and 214–216 (KNH). Substrate is bound by residues E223, R245, and 251–254 (HILR).

This sequence belongs to the phosphofructokinase type A (PFKA) family. ATP-dependent PFK group I subfamily. Prokaryotic clade 'B1' sub-subfamily. In terms of assembly, homotetramer. Mg(2+) serves as cofactor.

It localises to the cytoplasm. The catalysed reaction is beta-D-fructose 6-phosphate + ATP = beta-D-fructose 1,6-bisphosphate + ADP + H(+). Its pathway is carbohydrate degradation; glycolysis; D-glyceraldehyde 3-phosphate and glycerone phosphate from D-glucose: step 3/4. Allosterically activated by ADP and other diphosphonucleosides, and allosterically inhibited by phosphoenolpyruvate. Its function is as follows. Catalyzes the phosphorylation of D-fructose 6-phosphate to fructose 1,6-bisphosphate by ATP, the first committing step of glycolysis. The polypeptide is ATP-dependent 6-phosphofructokinase (Streptococcus mutans serotype c (strain ATCC 700610 / UA159)).